We begin with the raw amino-acid sequence, 1292 residues long: Kinesin-like protein KIN-12A (1292 aa).

Residues 1 to 86 (MKKHFTLPRN…LSAETATESG (86 aa)) are disordered. Positions 19 to 29 (PHSPNPSISKS) are enriched in low complexity. The segment covering 62–71 (PLPPRPPPSN) has biased composition (pro residues). Residues 91-426 (GVKVIVRMKP…LRFAQRAKAI (336 aa)) form the Kinesin motor domain. ATP is bound at residue 165–172 (GQTGSGKT). 3 microtubules-binding regions span residues 293-297 (SSRSH), 326-332 (VDLAGSE), and 375-379 (HIPYR). The neck stretch occupies residues 424–461 (KAIQNKAVVNEVMQDDVNFLRGVIHQLRDELQRMKNDG). Positions 677–724 (SVSPTIRNSRKSLKTSELSTASQKDSEGENLVTEAADPSPATSKKMNN) are disordered. Coiled coils occupy residues 945 to 992 (EVLK…CYID) and 1047 to 1232 (SEEL…NQLV).

Belongs to the TRAFAC class myosin-kinesin ATPase superfamily. Kinesin family. KIN-12 subfamily. As to quaternary structure, homodimer and heterodimer with KIN12B. Interacts with TIO.

Its subcellular location is the cytoplasm. The protein resides in the cytoskeleton. It localises to the phragmoplast. In terms of biological role, plus-end directed kinesin-like motor enzyme that plays a critical role in the organization of phragmoplast microtubules during cytokinesis. Constitutes a signaling module in association with serine/threonine-protein kinase TIO that is required to support phragmoplast expansion and cell-plate growth in plant cells. Binds microtubules in an ATP-sensitive manner. The protein is Kinesin-like protein KIN-12A of Arabidopsis thaliana (Mouse-ear cress).